A 73-amino-acid chain; its full sequence is UPF0235 protein SYO3AOP1_0257 (73 aa).

Belongs to the UPF0235 family.

The chain is UPF0235 protein SYO3AOP1_0257 from Sulfurihydrogenibium sp. (strain YO3AOP1).